A 365-amino-acid polypeptide reads, in one-letter code: MPTYNIVVFGGDHCGPEVTAEALKVLDVIDNSNADVHFNIQPHLLGGASIDAHGEPLTDEALAAAKAADAVILGAIGGPKWGTGKVRPEQGILRLRKEMGTYGNLRPCFFASESLVKTSPLKEEVCRGVNFNIVRELTGGIYFGERTEDDGSGYAVDTEPYSRAEIERVARLAGFLALAEDPPCPVWSLDKANVMATSRLWRKTVTDVFANEFPQLKIGHHLIDSAAMLMVKNPRALNGVIVTSNLFGDIISDEASVIPGSLGLLPSASLTASPDGKSKCNGIYEPIHGSAPDISGKGIVNPVAMILSLGMMCKYSLQQPELAKKIDEAVRNVIEKGINTADIGGSAKTAEVGDAIAKELEALLK.

NAD(+) is bound at residue 78–89 (GPKWGTGKVRPE). Residues R96, R106, R135, and D224 each contribute to the substrate site. Mg(2+)-binding residues include D224, D249, and D253. 289–301 (GSAPDISGKGIVN) serves as a coordination point for NAD(+).

The protein belongs to the isocitrate and isopropylmalate dehydrogenases family. In terms of assembly, homodimer. Requires Mg(2+) as cofactor. The cofactor is Mn(2+).

The protein localises to the cytoplasm. It catalyses the reaction (2R,3S)-3-isopropylmalate + NAD(+) = 4-methyl-2-oxopentanoate + CO2 + NADH. Its pathway is amino-acid biosynthesis; L-leucine biosynthesis; L-leucine from 3-methyl-2-oxobutanoate: step 3/4. Its function is as follows. Catalyzes the oxidation of 3-carboxy-2-hydroxy-4-methylpentanoate (3-isopropylmalate) to 3-carboxy-4-methyl-2-oxopentanoate. The product decarboxylates to 4-methyl-2 oxopentanoate. This Zymoseptoria tritici (Speckled leaf blotch fungus) protein is 3-isopropylmalate dehydrogenase (LEUC).